The primary structure comprises 267 residues: Protein I267L (267 aa).

The protein belongs to the asfivirus I267L family. As to quaternary structure, interacts with host RNF135.

Its function is as follows. Plays a role in the inhibition of host RNA Pol-III-RIGI-mediated innate antiviral response. Mechanistically, interacts with host E3 ubiquitin ligase RNF135, disrupting RNF135-RIGI interaction and impairing RNF135-mediated 'Lys-63'-polyubiquitination and activation of RIGI. This chain is Protein I267L, found in African swine fever virus (strain Badajoz 1971 Vero-adapted) (Ba71V).